Reading from the N-terminus, the 278-residue chain is Reaction center protein L chain (278 aa).

3 helical membrane-spanning segments follow: residues 33-56, 90-118, and 121-146; these read GFFG…GATI, GLWQ…RKLG, and FHIP…ILMG. Residues histidine 159 and histidine 179 each coordinate (7R,8Z)-bacteriochlorophyll b. Residues 176–205 traverse the membrane as a helical segment; the sequence is NPAHMLAITFFFTNCLALSMHGSLILSVTN. Histidine 196 lines the Fe cation pocket. A ubiquinone is bound at residue phenylalanine 222. Residues 231–257 form a helical membrane-spanning segment; sequence GALAIHRLGLFLALSAVFWSAVCIVIS. Residue histidine 236 participates in Fe cation binding.

The protein belongs to the reaction center PufL/M/PsbA/D family. Reaction center is composed of four bacteriochlorophylls, two bacteriopheophytins, two ubiquinones, one iron, and two highly hydrophobic polypeptide chains (designated L and M).

It is found in the cellular chromatophore membrane. Functionally, the reaction center is a membrane-bound complex that mediates the initial photochemical event in the electron transfer process of photosynthesis. The sequence is that of Reaction center protein L chain (pufL) from Allochromatium vinosum (strain ATCC 17899 / DSM 180 / NBRC 103801 / NCIMB 10441 / D) (Chromatium vinosum).